The primary structure comprises 478 residues: Nuclear distribution protein PAC1 (478 aa).

In terms of domain architecture, LisH spans Gln-9 to Val-41. Positions Thr-60–Thr-87 form a coiled coil. 8 WD repeats span residues Ser-113–Lys-154, His-156–Arg-196, Gly-200–Thr-247, Gly-250–Thr-289, Gly-292–Leu-352, Gly-354–Arg-393, Ala-398–Ala-439, and Ile-440–Ala-477.

The protein belongs to the WD repeat LIS1/nudF family. In terms of assembly, self-associates. Interacts with NDL1 and dynein.

It is found in the cytoplasm. Its subcellular location is the cytoskeleton. The protein resides in the spindle pole. In terms of biological role, positively regulates the activity of the minus-end directed microtubule motor protein dynein. May enhance dynein-mediated microtubule sliding by targeting dynein to the microtubule plus end. Required for nuclear migration during vegetative growth as well as development. Required for retrograde early endosome (EE) transport from the hyphal tip. Required for localization of dynein to the mitotic spindle poles. Recruits additional proteins to the dynein complex at SPBs. This is Nuclear distribution protein PAC1 from Paracoccidioides brasiliensis (strain Pb18).